Here is a 263-residue protein sequence, read N- to C-terminus: MAFLWLLSCWALLGTTFGCGVPAIHPVLSGLSRIVNGEDAVPGSWPWQVSLQDKTGFHFCGGSLISEDWVVTAAHCGVRTSDVVVAGEFDQGSDEENIQVLKIAKVFKNPKFSILTVNNDITLLKLATPARFSQTVSAVCLPSADDDFPAGTLCATTGWGKTKYNANKTPDKLQQAALPLLSNAECKKSWGRRITDVMICAGASGVSSCMGDSGGPLVCQKDGAWTLVGIVSWGSRTCSTTTPAVYARVAKLIPWVQKILAAN.

The first 18 residues, methionine 1–glycine 18, serve as a signal peptide directing secretion. 5 cysteine pairs are disulfide-bonded: cysteine 19-cysteine 140, cysteine 60-cysteine 76, cysteine 154-cysteine 219, cysteine 186-cysteine 200, and cysteine 209-cysteine 238. The 228-residue stretch at isoleucine 34–alanine 261 folds into the Peptidase S1 domain. Catalysis depends on charge relay system residues histidine 75 and aspartate 120. Serine 213 acts as the Charge relay system in catalysis.

Belongs to the peptidase S1 family.

Its subcellular location is the secreted. The protein localises to the extracellular space. It carries out the reaction Preferential cleavage: Tyr-|-Xaa, Trp-|-Xaa, Phe-|-Xaa, Leu-|-Xaa.. This is Chymotrypsinogen B2 (CTRB2) from Homo sapiens (Human).